The chain runs to 368 residues: Propane 2-monooxygenase, hydroxylase component small subunit (368 aa).

Residues Met-1–Arg-33 form a disordered region.

Belongs to the TmoE/XamoE family. The propane 2-monooxygenase multicomponent enzyme system is composed of an electron transfer component and a monooxygenase component interacting with the effector protein PrmD. The electron transfer component is composed of a reductase (PrmB), and the monooxygenase component is formed by a large subunit (PrmA) and a small subunit (PrmC). Probably requires the presence of the chaperonin-like protein PrmG to ensure a productive folding, resulting of a soluble PrmC, which leads to the active form of PrmABCD.

The enzyme catalyses propane + NADH + O2 + H(+) = propan-2-ol + NAD(+) + H2O. It carries out the reaction phenol + NADH + O2 + H(+) = hydroquinone + NAD(+) + H2O. In terms of biological role, component of the propane 2-monooxygenase multicomponent enzyme system which is involved in the degradation of propane via the O2-dependent hydroxylation of propane. Under acetone induction, also able to catalyze the oxidation of phenol to yield hydroquinone. The sequence is that of Propane 2-monooxygenase, hydroxylase component small subunit from Gordonia sp. (strain TY-5).